Consider the following 146-residue polypeptide: Hemoglobin subunit beta (146 aa).

Residues 2–146 form the Globin domain; the sequence is HWSAEEKQLI…VAHALARKYH (145 aa). Positions 63 and 92 each coordinate heme b.

Belongs to the globin family. As to quaternary structure, heterotetramer of two alpha chains and two beta chains. As to expression, red blood cells.

In terms of biological role, involved in oxygen transport from the lung to the various peripheral tissues. The polypeptide is Hemoglobin subunit beta (HBB) (Anseranas semipalmata (Magpie goose)).